Consider the following 449-residue polypeptide: Tubulin alpha-8 chain (449 aa).

The MREC motif motif lies at 1-4 (MREC). Residues Gln-11, Glu-71, Ser-140, Gly-144, Thr-145, Thr-179, Asn-206, and Asn-228 each coordinate GTP. Residue Glu-71 participates in Mg(2+) binding. Glu-254 is a catalytic residue.

Belongs to the tubulin family. In terms of assembly, dimer of alpha and beta chains. A typical microtubule is a hollow water-filled tube with an outer diameter of 25 nm and an inner diameter of 15 nM. Alpha-beta heterodimers associate head-to-tail to form protofilaments running lengthwise along the microtubule wall with the beta-tubulin subunit facing the microtubule plus end conferring a structural polarity. Microtubules usually have 13 protofilaments but different protofilament numbers can be found in some organisms and specialized cells. Mg(2+) serves as cofactor. In terms of processing, some glutamate residues at the C-terminus are polyglycylated, resulting in polyglycine chains on the gamma-carboxyl group. Glycylation is mainly limited to tubulin incorporated into axonemes (cilia and flagella) whereas glutamylation is prevalent in neuronal cells, centrioles, axonemes, and the mitotic spindle. Both modifications can coexist on the same protein on adjacent residues, and lowering polyglycylation levels increases polyglutamylation, and reciprocally. Cilia and flagella glycylation is required for their stability and maintenance. Flagella glycylation controls sperm motility. Some glutamate residues at the C-terminus are polyglutamylated, resulting in polyglutamate chains on the gamma-carboxyl group. Polyglutamylation plays a key role in microtubule severing by spastin (SPAST). SPAST preferentially recognizes and acts on microtubules decorated with short polyglutamate tails: severing activity by SPAST increases as the number of glutamates per tubulin rises from one to eight, but decreases beyond this glutamylation threshold. Glutamylation is also involved in cilia motility. Post-translationally, the C-terminal phenylalanine residue is cleaved by MATCAP1/KIAA0895L.

Its subcellular location is the cytoplasm. It localises to the cytoskeleton. It carries out the reaction GTP + H2O = GDP + phosphate + H(+). Functionally, tubulin is the major constituent of microtubules, a cylinder consisting of laterally associated linear protofilaments composed of alpha- and beta-tubulin heterodimers. Microtubules grow by the addition of GTP-tubulin dimers to the microtubule end, where a stabilizing cap forms. Below the cap, tubulin dimers are in GDP-bound state, owing to GTPase activity of alpha-tubulin. The protein is Tubulin alpha-8 chain (TUBA8) of Bos taurus (Bovine).